The chain runs to 529 residues: MEHRVVGPGPYRATRLWNETVELFRARMPLRRHRCRFKSYEHCFTASEAVDWLHELLRNSQNFGPEVTRKQTVQLLGKFLKNHVIEDIKGKWGQEDFEDNRHLYRFPPSSPLKPYPKKPLYQRDVIKFPEWNDPPPGTSQENIPVRPIVMNSEMWFKRHSIAIGEVPACRLVHRRQLTEANVEEIWKSTTLSYLQKILGLDSLEEVLNTKLVSSKFIIHNVYSVSKQGVVILDDKSKELPHWVLSAMKCLANWPNCTDWKQPMYLGFEKDVFKTIADYYGHLKEPLLTFHLFDAFVSVLGLLPKEKTAIEAFQLCCLLLPPENRRKLQLLMRMMARICLNKEMPPLSDGFGTRTLMVQTFSRCILCSKDEVDLDELLAARLVTFLMDNYQEILKVPLALQTSIEERVAHLRRVQIKYPGADMDITLSAPSFCRQISPEEFEYQRAYGSQEPLAALLEEVIADDKLSSKEKKKKLKQFQKSYPEVYQERFPTPESEALLFPEKPKAKPQLFMWALRKPFQPFQRTRSFRM.

The DEP domain maps to 24–108 (FRARMPLRRH…DNRHLYRFPP (85 aa)). Residue Ser-160 is modified to Phosphoserine. Positions 201 to 393 (DSLEEVLNTK…FLMDNYQEIL (193 aa)) constitute a Rho-GAP domain. Ser-436 is subject to Phosphoserine.

The chain is DEP domain-containing protein 1B (Depdc1b) from Mus musculus (Mouse).